The chain runs to 362 residues: tRNA-specific 2-thiouridylase MnmA (362 aa).

Residues 6 to 13 (AMSGGVDS) and leucine 32 contribute to the ATP site. Residue cysteine 101 is the Nucleophile of the active site. A disulfide bridge connects residues cysteine 101 and cysteine 197. Glycine 125 lines the ATP pocket. Positions 147 to 149 (KDQ) are interaction with tRNA. Residue cysteine 197 is the Cysteine persulfide intermediate of the active site.

Belongs to the MnmA/TRMU family.

The protein resides in the cytoplasm. The enzyme catalyses S-sulfanyl-L-cysteinyl-[protein] + uridine(34) in tRNA + AH2 + ATP = 2-thiouridine(34) in tRNA + L-cysteinyl-[protein] + A + AMP + diphosphate + H(+). Catalyzes the 2-thiolation of uridine at the wobble position (U34) of tRNA, leading to the formation of s(2)U34. In Saccharopolyspora erythraea (strain ATCC 11635 / DSM 40517 / JCM 4748 / NBRC 13426 / NCIMB 8594 / NRRL 2338), this protein is tRNA-specific 2-thiouridylase MnmA.